We begin with the raw amino-acid sequence, 405 residues long: Scramblase ANY1 (405 aa).

At 1–51 (MSTTGPLDATLIRDVAVATATKASYDMSDTLYSYLPKVDQFYIPEWLTMQF) the chain is on the cytoplasmic side. The helical transmembrane segment at 52 to 72 (IANNLISFTPLFSYGTTIISI) threads the bilayer. The Lumenal portion of the chain corresponds to 73–76 (EKCK). The chain crosses the membrane as a helical span at residues 77-97 (TALGFSIDICATMLIASILRI). Residues 98 to 103 (SYYLIT) lie on the Cytoplasmic side of the membrane. A helical membrane pass occupies residues 104 to 124 (PYEITLLRQSLVMIFIQLILL). The Lumenal portion of the chain corresponds to 125–177 (RTSLKYRPDEYKYQNLTDVESLSHLIHDIWFEFFSCINRPKFLSEDWKNLIKS). Residues 178-198 (LSFTNLLKFSFKIFLAFFYKI) form a helical membrane-spanning segment. At 199–223 (LKFFDPNFKRIGAFWQWDDDKNFWR) the chain is on the cytoplasmic side. A helical transmembrane segment spans residues 224 to 244 (FLALFATVQILVTFFISNILN). Residues 245–254 (WDSLAQGLGS) are Lumenal-facing. The PQ-loop domain occupies 252 to 309 (LGSIIGSLGLLVESLLPLPQIAILYKLKSVQGFKLILLVSWLCGDTLKITYLIFGAKN). Residues 255–275 (IIGSLGLLVESLLPLPQIAIL) traverse the membrane as a helical segment. The Cytoplasmic segment spans residues 276-283 (YKLKSVQG). A helical membrane pass occupies residues 284–306 (FKLILLVSWLCGDTLKITYLIFG). The Lumenal segment spans residues 307–312 (AKNISA). A helical transmembrane segment spans residues 313-335 (LFVIFALFQMSLDFYIGGQYIYY). Over 336–405 (RYYYPKLRHQ…GKSQAQAVTL (70 aa)) the chain is Cytoplasmic. Residues 379–405 (LKQDSNDTSDSPQDDQVGKSQAQAVTL) form a disordered region. Over residues 396 to 405 (GKSQAQAVTL) the composition is skewed to polar residues.

In terms of assembly, interacts with NEO1.

It is found in the golgi apparatus membrane. The protein localises to the late endosome membrane. In terms of biological role, phospholipid scramblase that transports phosphatidylserine (PS) and phosphatidylethalonamine (PE) bidirectionally from one leaflet to the other of the phospholipid bilayer to at least partially collapse the membrane asymmetry established by NEO1 and other flippases. The PS scramblase activity has been disputed. Functions in the trafficking pathway from endosomes to the trans-Golgi network (TGN). This is Scramblase ANY1 from Saccharomyces cerevisiae (strain ATCC 204508 / S288c) (Baker's yeast).